The chain runs to 425 residues: Dihydroorotase (425 aa).

Positions 56 and 58 each coordinate Zn(2+). Substrate is bound by residues 58 to 60 (HYR) and N90. The Zn(2+) site is built by D148, H175, and H228. Residue N274 coordinates substrate. Residue D301 participates in Zn(2+) binding. The active site involves D301. Substrate contacts are provided by residues H305 and 319–320 (FG).

This sequence belongs to the metallo-dependent hydrolases superfamily. DHOase family. Class I DHOase subfamily. Requires Zn(2+) as cofactor.

It catalyses the reaction (S)-dihydroorotate + H2O = N-carbamoyl-L-aspartate + H(+). The protein operates within pyrimidine metabolism; UMP biosynthesis via de novo pathway; (S)-dihydroorotate from bicarbonate: step 3/3. Catalyzes the reversible cyclization of carbamoyl aspartate to dihydroorotate. In Lactobacillus delbrueckii subsp. bulgaricus (strain ATCC BAA-365 / Lb-18), this protein is Dihydroorotase.